The sequence spans 267 residues: MDMEIEDSSPIDDLKLQKLDTNVYFGPCEILTQPILLQYENIKFIIGVNLSTEKIASFYTQYFRNSNSVVVNLCSPTTAAVATKKAAIDLYIRNNTILLQKFVGQYLQMGKKIKTSLTQAQTDTIQSLPQFCNSNVLSGEPLVQYQAFNDLLALFKSFSHFGNILVISSHSYDCALLKFLISRVMTYYPLVTIQDSLQYMKATLNISISTSDEFDILNDKELWEFGQTQEILKRRQTSSVKRRCVNLPENSTIDNRMLMGTTKRGRF.

This is an uncharacterized protein from Saccharomyces cerevisiae (strain ATCC 204508 / S288c) (Baker's yeast).